A 672-amino-acid polypeptide reads, in one-letter code: Probable urocanate hydratase (672 aa).

Residues 128–129 (GG), Q206, 253–255 (GMS), E273, 318–319 (NV), 340–344 (QTSLH), 351–352 (YY), Y400, and G592 contribute to the NAD(+) site.

The protein belongs to the urocanase family. It depends on NAD(+) as a cofactor.

It carries out the reaction 4-imidazolone-5-propanoate = trans-urocanate + H2O. It participates in amino-acid degradation; L-histidine degradation into L-glutamate; N-formimidoyl-L-glutamate from L-histidine: step 2/3. The chain is Probable urocanate hydratase (uroc1) from Dictyostelium discoideum (Social amoeba).